The following is a 432-amino-acid chain: Putative D-alanyl-D-alanine carboxypeptidase (432 aa).

A helical; Signal-anchor transmembrane segment spans residues 7-25; that stretch reads ATVLLTFSLSAFAVEYPVL.

The protein belongs to the peptidase S12 family. YfeW subfamily.

The protein localises to the cell inner membrane. The catalysed reaction is Preferential cleavage: (Ac)2-L-Lys-D-Ala-|-D-Ala. Also transpeptidation of peptidyl-alanyl moieties that are N-acyl substituents of D-alanine.. This Salmonella heidelberg (strain SL476) protein is Putative D-alanyl-D-alanine carboxypeptidase.